A 516-amino-acid polypeptide reads, in one-letter code: 1-pyrroline-5-carboxylate dehydrogenase (516 aa).

Catalysis depends on residues E287 and C321.

This sequence belongs to the aldehyde dehydrogenase family. RocA subfamily.

The enzyme catalyses L-glutamate 5-semialdehyde + NAD(+) + H2O = L-glutamate + NADH + 2 H(+). The protein operates within amino-acid degradation; L-proline degradation into L-glutamate; L-glutamate from L-proline: step 2/2. This chain is 1-pyrroline-5-carboxylate dehydrogenase, found in Bacillus licheniformis (strain ATCC 14580 / DSM 13 / JCM 2505 / CCUG 7422 / NBRC 12200 / NCIMB 9375 / NCTC 10341 / NRRL NRS-1264 / Gibson 46).